The primary structure comprises 373 residues: Leucine aminopeptidase 1 (373 aa).

Positions 1 to 18 are cleaved as a signal peptide; sequence MKLLSVLALSATATSVLG. 2 residues coordinate Zn(2+): His176 and Asp195. A glycan (N-linked (GlcNAc...) asparagine) is linked at Asn196. Glu234 and Asp261 together coordinate Zn(2+). Asn288 carries N-linked (GlcNAc...) asparagine glycosylation. A disulfide bridge links Cys310 with Cys314. His343 provides a ligand contact to Zn(2+). The N-linked (GlcNAc...) asparagine glycan is linked to Asn348.

The protein belongs to the peptidase M28 family. M28E subfamily. Monomer. Requires Zn(2+) as cofactor.

It is found in the secreted. Activity is inhibited by EDTA, o-phenanthroline, bestatin and amastatin. Functionally, extracellular aminopeptidase which contributes to pathogenicity. The polypeptide is Leucine aminopeptidase 1 (LAP1) (Trichophyton rubrum (Athlete's foot fungus)).